Consider the following 255-residue polypeptide: Type III pantothenate kinase (255 aa).

6 to 13 is a binding site for ATP; sequence DVGNTNIV. Substrate is bound by residues Tyr100 and 107 to 110; that span reads GADR. Asp109 functions as the Proton acceptor in the catalytic mechanism. Residue Asp129 coordinates K(+). Thr132 is a binding site for ATP. Thr184 contributes to the substrate binding site.

The protein belongs to the type III pantothenate kinase family. Homodimer. Requires NH4(+) as cofactor. It depends on K(+) as a cofactor.

It localises to the cytoplasm. The catalysed reaction is (R)-pantothenate + ATP = (R)-4'-phosphopantothenate + ADP + H(+). It participates in cofactor biosynthesis; coenzyme A biosynthesis; CoA from (R)-pantothenate: step 1/5. In terms of biological role, catalyzes the phosphorylation of pantothenate (Pan), the first step in CoA biosynthesis. This Caldanaerobacter subterraneus subsp. tengcongensis (strain DSM 15242 / JCM 11007 / NBRC 100824 / MB4) (Thermoanaerobacter tengcongensis) protein is Type III pantothenate kinase.